The sequence spans 269 residues: uncharacterized protein (269 aa).

15–41 (QKSVLITGCSSGIGLESALELKRQGFH) is an NADP(+) binding site. Position 146 (S146) interacts with substrate. Catalysis depends on Y159, which acts as the Proton acceptor.

Belongs to the short-chain dehydrogenases/reductases (SDR) family.

This is an uncharacterized protein from Escherichia coli O6:H1 (strain CFT073 / ATCC 700928 / UPEC).